Reading from the N-terminus, the 152-residue chain is MSTFGELANEVVNNSYHKDLLRLSWGVLSDDMEGTGLMLMANLFNMSPESRLKFGRLGHLSTGRDNSKLRGHSITLMYALKNFVDALDDVDRLKCVVEKFAVNHINRQISAEEFGKIVGPFRAVLRIRMGDYFDEEIVAAWAALIAVVQAAL.

The Globin domain maps to 12–152 (VNNSYHKDLL…ALIAVVQAAL (141 aa)). Heme b is bound at residue H104.

This sequence belongs to the globin family.

The sequence is that of Globin, minor from Anadara trapezia (Sydney cockle).